Here is a 123-residue protein sequence, read N- to C-terminus: Small ribosomal subunit protein uS12 (123 aa).

3-methylthioaspartic acid is present on Asp-89. Residues 100 to 123 (GSLDTSGVKGRNQGRSKYGTKRPK) form a disordered region. Positions 111–123 (NQGRSKYGTKRPK) are enriched in basic residues.

It belongs to the universal ribosomal protein uS12 family. Part of the 30S ribosomal subunit. Contacts proteins S8 and S17. May interact with IF1 in the 30S initiation complex.

In terms of biological role, with S4 and S5 plays an important role in translational accuracy. Interacts with and stabilizes bases of the 16S rRNA that are involved in tRNA selection in the A site and with the mRNA backbone. Located at the interface of the 30S and 50S subunits, it traverses the body of the 30S subunit contacting proteins on the other side and probably holding the rRNA structure together. The combined cluster of proteins S8, S12 and S17 appears to hold together the shoulder and platform of the 30S subunit. The polypeptide is Small ribosomal subunit protein uS12 (Pseudomonas fluorescens (strain ATCC BAA-477 / NRRL B-23932 / Pf-5)).